The chain runs to 197 residues: Imidazoleglycerol-phosphate dehydratase (197 aa).

It belongs to the imidazoleglycerol-phosphate dehydratase family.

The protein localises to the cytoplasm. The catalysed reaction is D-erythro-1-(imidazol-4-yl)glycerol 3-phosphate = 3-(imidazol-4-yl)-2-oxopropyl phosphate + H2O. It functions in the pathway amino-acid biosynthesis; L-histidine biosynthesis; L-histidine from 5-phospho-alpha-D-ribose 1-diphosphate: step 6/9. This chain is Imidazoleglycerol-phosphate dehydratase, found in Nitrosococcus oceani (strain ATCC 19707 / BCRC 17464 / JCM 30415 / NCIMB 11848 / C-107).